The sequence spans 374 residues: Putative 12-oxophytodienoate reductase 5 (374 aa).

Residues 30 to 32, Ala63, and Gln105 each bind FMN; that span reads PMT. 177-180 is a binding site for substrate; sequence HGAN. The active-site Proton donor is the Tyr182. Residue Arg229 participates in FMN binding. Arg270 contributes to the substrate binding site. FMN-binding positions include Gly300 and 321–322; that span reads GR.

It belongs to the NADH:flavin oxidoreductase/NADH oxidase family. The cofactor is FMN.

Its function is as follows. Putative oxophytodienoate reductase that may be involved in the biosynthesis or metabolism of oxylipin signaling molecules. The protein is Putative 12-oxophytodienoate reductase 5 (OPR5) of Oryza sativa subsp. japonica (Rice).